The sequence spans 444 residues: Multidrug resistance protein MdtA (444 aa).

The first 20 residues, 1 to 20 (MKSQSKRTSRLFVFVGVVVA), serve as a signal peptide directing secretion. Residues 37–52 (NNTSGAQQSARGQDTS) show a composition bias toward polar residues. Disordered regions lie at residues 37-60 (NNTS…RNTP) and 398-444 (TPRS…AEKS). Low complexity predominate over residues 409-419 (ASAEKAAAEAE). Over residues 435 to 444 (ARSTTAAEKS) the composition is skewed to polar residues.

This sequence belongs to the membrane fusion protein (MFP) (TC 8.A.1) family. In terms of assembly, part of a tripartite efflux system composed of MdtA, MdtB and MdtC.

Its subcellular location is the cell inner membrane. This Yersinia pseudotuberculosis serotype O:3 (strain YPIII) protein is Multidrug resistance protein MdtA.